Reading from the N-terminus, the 303-residue chain is Probable cell division protein WhiA (303 aa).

Residues 272 to 303 constitute a DNA-binding region (H-T-H motif); sequence SIQQLADSLSTPLTKSGVNHRLRKINKIADEL.

It belongs to the WhiA family.

In terms of biological role, involved in cell division and chromosome segregation. The protein is Probable cell division protein WhiA of Streptococcus pneumoniae (strain Hungary19A-6).